The sequence spans 506 residues: Cytochrome P450 monooxygenase BOA3 (506 aa).

A helical transmembrane segment spans residues Ile15–Ile35. Cys451 serves as a coordination point for heme.

This sequence belongs to the cytochrome P450 family. Heme is required as a cofactor.

It is found in the membrane. The protein operates within polyketide biosynthesis. Functionally, cytochrome P450 monooxygenase; part of the gene cluster A that mediates the biosynthesis of botcinic acid and its botcinin derivatives, acetate-derived polyketides that contribute to virulence when combined with the sesquiterpene botrydial. Botcinic acid and its derivatives have been shown to induce chlorosis and necrosis during host plant infection, but also have antifungal activities. Two polyketide synthases, BOA6 and BOA9, are involved in the biosynthesis of botcinins. BOA6 mediates the formation of the per-methylated tetraketide core by condensation of four units of malonyl-CoA with one unit of acetyl-CoA, which would be methylated in activated methylene groups to yield a bicyclic acid intermediate that could then either be converted to botrylactone derivatives or lose the starter acetate unit through a retro-Claisen type C-C bond cleavage to yield botcinin derivatives. The second polyketide synthase, BOA9, is probably required for the biosynthesis of the tetraketide side chain of botcinins. The methyltransferase (MT) domain within BOA6 is probably responsible for the incorporation of four methyl groups. The trans-enoyl reductase BOA5 might take over the enoyl reductase function of BOA6 that misses an ER domain. The monooxygenases BOA2, BOA3 and BOA4 might be involved in further hydroxylations at C4, C5 and C8, whereas BOA7, close to BOA9, could potentially be involved in the hydroxylation at C4 in the side chain of botcinins. The sequence is that of Cytochrome P450 monooxygenase BOA3 from Botryotinia fuckeliana (strain B05.10) (Noble rot fungus).